A 394-amino-acid polypeptide reads, in one-letter code: Argininosuccinate synthase (394 aa).

ATP is bound by residues 7 to 15 and alanine 34; that span reads AYSGGLDTS. L-citrulline is bound by residues tyrosine 85 and serine 90. Glycine 115 provides a ligand contact to ATP. The L-aspartate site is built by threonine 117, asparagine 121, and aspartate 122. Residue asparagine 121 participates in L-citrulline binding. Arginine 125, serine 176, serine 185, glutamate 261, and tyrosine 273 together coordinate L-citrulline.

It belongs to the argininosuccinate synthase family. Type 1 subfamily. In terms of assembly, homotetramer.

The protein resides in the cytoplasm. It carries out the reaction L-citrulline + L-aspartate + ATP = 2-(N(omega)-L-arginino)succinate + AMP + diphosphate + H(+). Its pathway is amino-acid biosynthesis; L-arginine biosynthesis; L-arginine from L-ornithine and carbamoyl phosphate: step 2/3. The chain is Argininosuccinate synthase from Ehrlichia ruminantium (strain Gardel).